The following is a 213-amino-acid chain: N-(5'-phosphoribosyl)anthranilate isomerase (213 aa).

This sequence belongs to the TrpF family.

The catalysed reaction is N-(5-phospho-beta-D-ribosyl)anthranilate = 1-(2-carboxyphenylamino)-1-deoxy-D-ribulose 5-phosphate. It participates in amino-acid biosynthesis; L-tryptophan biosynthesis; L-tryptophan from chorismate: step 3/5. In Roseiflexus sp. (strain RS-1), this protein is N-(5'-phosphoribosyl)anthranilate isomerase.